The primary structure comprises 181 residues: Large ribosomal subunit protein uL6 (181 aa).

Belongs to the universal ribosomal protein uL6 family. Part of the 50S ribosomal subunit.

Functionally, this protein binds to the 23S rRNA, and is important in its secondary structure. It is located near the subunit interface in the base of the L7/L12 stalk, and near the tRNA binding site of the peptidyltransferase center. This Synechococcus sp. (strain CC9605) protein is Large ribosomal subunit protein uL6.